The chain runs to 282 residues: Transcription repressor MYB4 (282 aa).

2 consecutive HTH myb-type domains span residues lysine 9–leucine 61 and arginine 62–leucine 116. DNA-binding regions (H-T-H motif) lie at residues tryptophan 37 to leucine 61 and tryptophan 89 to isoleucine 112. The interval arginine 119–proline 145 is disordered. A compositionally biased stretch (polar residues) spans glutamine 130–proline 145.

In terms of assembly, interacts with BHLH12/MYC1 and BHLH42/TT8. Interacts with SAD2. In terms of tissue distribution, widely expressed at low level. Highly expressed in siliques. Weakly expressed in seedlings, young and mature leaves, cauline leaves, stems, flower buds and roots.

Its subcellular location is the nucleus. In terms of biological role, transcription repressor involved in regulation of protection against UV. Mediates transcriptional repression of CYP73A5, the gene encoding trans-cinnamate 4-monooxygenase, thereby regulating the accumulation of the UV-protectant compound sinapoylmalate. The protein is Transcription repressor MYB4 (MYB4) of Arabidopsis thaliana (Mouse-ear cress).